The following is a 584-amino-acid chain: Arginine--tRNA ligase (584 aa).

The 'HIGH' region motif lies at proline 127–histidine 137.

It belongs to the class-I aminoacyl-tRNA synthetase family. Monomer.

The protein localises to the cytoplasm. It catalyses the reaction tRNA(Arg) + L-arginine + ATP = L-arginyl-tRNA(Arg) + AMP + diphosphate. This chain is Arginine--tRNA ligase, found in Borrelia hermsii (strain HS1 / DAH).